A 192-amino-acid chain; its full sequence is Putative metal-sulfur cluster biosynthesis proteins YuaD (192 aa).

In terms of domain architecture, MOSC spans 15–179 (ADTKSFVTKQ…VYTGDEIEVH (165 aa)).

The chain is Putative metal-sulfur cluster biosynthesis proteins YuaD (yuaD) from Bacillus subtilis (strain 168).